Reading from the N-terminus, the 103-residue chain is Small ribosomal subunit protein uS10c (103 aa).

Belongs to the universal ribosomal protein uS10 family. In terms of assembly, part of the 30S ribosomal subunit.

It is found in the plastid. The protein localises to the chloroplast. Functionally, involved in the binding of tRNA to the ribosomes. The chain is Small ribosomal subunit protein uS10c from Emiliania huxleyi (Coccolithophore).